A 198-amino-acid chain; its full sequence is Ribonuclease HII (198 aa).

Residues H10–S198 form the RNase H type-2 domain. The a divalent metal cation site is built by D16, E17, and D108.

It belongs to the RNase HII family. Requires Mn(2+) as cofactor. Mg(2+) is required as a cofactor.

The protein resides in the cytoplasm. It catalyses the reaction Endonucleolytic cleavage to 5'-phosphomonoester.. Functionally, endonuclease that specifically degrades the RNA of RNA-DNA hybrids. This Escherichia coli (strain ATCC 8739 / DSM 1576 / NBRC 3972 / NCIMB 8545 / WDCM 00012 / Crooks) protein is Ribonuclease HII.